A 182-amino-acid polypeptide reads, in one-letter code: Ribosome maturation factor RimM (182 aa).

The region spanning 103 to 182 (EGDYYWKDLM…SIEVDWDPGF (80 aa)) is the PRC barrel domain.

This sequence belongs to the RimM family. In terms of assembly, binds ribosomal protein uS19.

It localises to the cytoplasm. Functionally, an accessory protein needed during the final step in the assembly of 30S ribosomal subunit, possibly for assembly of the head region. Essential for efficient processing of 16S rRNA. May be needed both before and after RbfA during the maturation of 16S rRNA. It has affinity for free ribosomal 30S subunits but not for 70S ribosomes. In Escherichia coli O139:H28 (strain E24377A / ETEC), this protein is Ribosome maturation factor RimM.